A 964-amino-acid polypeptide reads, in one-letter code: SKI family transcriptional corepressor 1 (964 aa).

Disordered stretches follow at residues 45 to 72 (TQLG…SSAL), 278 to 365 (RTFS…GGSA), 414 to 452 (AGEP…PGPG), 525 to 587 (AGGG…RKSS), 610 to 766 (REAY…GPAA), and 793 to 842 (YLCT…EDGL). Positions 283 to 310 (QGGGGGGANSGSGGAGKGGAGGGGGPGC) are enriched in gly residues. The segment covering 345–355 (ALGLAAAANGP) has biased composition (low complexity). Composition is skewed to gly residues over residues 356 to 365 (AGPGGPGGSA) and 417 to 440 (PKGG…GPGA). Residues 571–583 (SLAPLAPPPPPPA) show a composition bias toward pro residues. The span at 652–661 (DTADEPEVDV) shows a compositional bias: acidic residues. The span at 798 to 808 (ETHEPDKEDNH) shows a compositional bias: basic and acidic residues. Residues 823 to 834 (DQRSVSQPSPAN) are compositionally biased toward polar residues. Residues 857–921 (ENLAREELQK…DTLCNELDQE (65 aa)) adopt a coiled-coil conformation.

The protein belongs to the SKI family. As to quaternary structure, interacts with LBX1. Interacts with SMAD1, SMAD2 and SMAD3.

It is found in the nucleus. In terms of biological role, inhibits BMP signaling. Acts as a transcriptional corepressor of LBX1. This Rattus norvegicus (Rat) protein is SKI family transcriptional corepressor 1 (Skor1).